Reading from the N-terminus, the 387-residue chain is Dual-specificity RNA methyltransferase RlmN (387 aa).

Glutamate 93 serves as the catalytic Proton acceptor. The Radical SAM core domain maps to 99-343 (EENRGTLCIS…TTVRKTRGDD (245 aa)). Cysteines 106 and 348 form a disulfide. [4Fe-4S] cluster is bound by residues cysteine 113, cysteine 117, and cysteine 120. S-adenosyl-L-methionine is bound by residues 172-173 (GE), serine 204, 226-228 (SLH), and asparagine 305. Cysteine 348 serves as the catalytic S-methylcysteine intermediate.

It belongs to the radical SAM superfamily. RlmN family. The cofactor is [4Fe-4S] cluster.

It is found in the cytoplasm. The enzyme catalyses adenosine(2503) in 23S rRNA + 2 reduced [2Fe-2S]-[ferredoxin] + 2 S-adenosyl-L-methionine = 2-methyladenosine(2503) in 23S rRNA + 5'-deoxyadenosine + L-methionine + 2 oxidized [2Fe-2S]-[ferredoxin] + S-adenosyl-L-homocysteine. It catalyses the reaction adenosine(37) in tRNA + 2 reduced [2Fe-2S]-[ferredoxin] + 2 S-adenosyl-L-methionine = 2-methyladenosine(37) in tRNA + 5'-deoxyadenosine + L-methionine + 2 oxidized [2Fe-2S]-[ferredoxin] + S-adenosyl-L-homocysteine. In terms of biological role, specifically methylates position 2 of adenine 2503 in 23S rRNA and position 2 of adenine 37 in tRNAs. m2A2503 modification seems to play a crucial role in the proofreading step occurring at the peptidyl transferase center and thus would serve to optimize ribosomal fidelity. The polypeptide is Dual-specificity RNA methyltransferase RlmN (Janthinobacterium sp. (strain Marseille) (Minibacterium massiliensis)).